Here is a 120-residue protein sequence, read N- to C-terminus: Large ribosomal subunit protein bL20 (120 aa).

This sequence belongs to the bacterial ribosomal protein bL20 family.

Its function is as follows. Binds directly to 23S ribosomal RNA and is necessary for the in vitro assembly process of the 50S ribosomal subunit. It is not involved in the protein synthesizing functions of that subunit. The protein is Large ribosomal subunit protein bL20 of Pseudoalteromonas translucida (strain TAC 125).